The chain runs to 161 residues: Non-specific lipid transfer protein GPI-anchored 24 (161 aa).

The first 23 residues, 1-23 (MAQTTTLILLLATLLVAATTVSG), serve as a signal peptide directing secretion. 4 disulfide bridges follow: C42–C79, C49–C63, C64–C104, and C77–C113. N92 carries N-linked (GlcNAc...) asparagine glycosylation. The GPI-anchor amidated aspartate moiety is linked to residue D138. The propeptide at 139 to 161 (AASKLAGTGLVGIVVITIAAMFY) is removed in mature form.

This sequence belongs to the plant LTP family.

It is found in the cell membrane. Functionally, probable lipid transfer protein. In Arabidopsis thaliana (Mouse-ear cress), this protein is Non-specific lipid transfer protein GPI-anchored 24.